The primary structure comprises 370 residues: MEGSWRDVLAVLVILAQLTASGSSYQIIEGPQNVTVLKDSEAHFNCTVTHGWKLLMWTLNQMVVLSLTTQGPIITNNRFTYASYNSTDSFISELIIHDVQPSDSGSVQCSLQNSHGFGSAFLSVQVMGTLNIPSNNLIVTEGEPCNVTCYAVGWTSLPDISWELEVPVSHSSYNSFLESGNFMRVLSVLDLTPLGNGTLTCVAELKDLQASKSLTVNLTVVQPPPDSIGEEGPALPTWAIILLAVAFSLLLILIIVLIIIFCCCCASRREKEESTYQNEIRKSANMRTNKADPETKLKGGKENYGYSSDEAKAAQTASLPPKSAEVSLPEKRSSSLPYQELNKHQPGPATHPRVSFDIASPQKVRNVTLV.

The N-terminal stretch at 1–24 (MEGSWRDVLAVLVILAQLTASGSS) is a signal peptide. 2 consecutive Ig-like V-type domains span residues 25 to 125 (YQII…LSVQ) and 128 to 215 (GTLN…KSLT). Residues 25 to 239 (YQIIEGPQNV…EEGPALPTWA (215 aa)) lie on the Extracellular side of the membrane. N-linked (GlcNAc...) asparagine glycosylation is found at Asn-33 and Asn-45. A disulfide bridge connects residues Cys-46 and Cys-109. N-linked (GlcNAc...) asparagine glycans are attached at residues Asn-146, Asn-196, and Asn-217. Cys-149 and Cys-201 are oxidised to a cystine. Residues 240–260 (IILLAVAFSLLLILIIVLIII) traverse the membrane as a helical segment. The Cytoplasmic segment spans residues 261-370 (FCCCCASRRE…PQKVRNVTLV (110 aa)). The tract at residues 284–359 (ANMRTNKADP…THPRVSFDIA (76 aa)) is disordered. A compositionally biased stretch (basic and acidic residues) spans 289-301 (NKADPETKLKGGK).

This sequence belongs to the immunoglobulin superfamily. In terms of assembly, interacts with MAGI1 at tight junctions, forms a tripartite complex with NPHS1. Interacts with LNX1 isoform 2 via its PDZ 2 domain, it may also interact with other isoforms containing this domain. N-glycosylated. As to expression, localized to kidney glomeruli and small intestinal epithelial cells. In kidney glomeruli, it is localized at slit diaphragm. Also found in spermatogonia, gonocytes, hematopoietic stem cells and Sertoli cells.

The protein resides in the apical cell membrane. It is found in the cell junction. Its subcellular location is the tight junction. Provides, together with MAGI1, an adhesion machinery at tight junctions, which may regulate the permeability of kidney glomerulus and small intestinal epithelial cells. Mediates calcium-independent homophilic cell adhesion. In testis, it may function as a cell adhesion molecule rather than a tight-junction protein. It may participate in the adhesion between spermatogonia-spermatogonia, spermatogonia-Sertoli cells, and Sertoli cells-Sertoli cells. The sequence is that of Immunoglobulin superfamily member 5 (Igsf5) from Mus musculus (Mouse).